The following is a 133-amino-acid chain: Transmembrane protein 60 (133 aa).

The next 4 helical transmembrane spans lie at 5-25 (LAQRVLLTWLFTLLFLIMLVL), 35-55 (WFLIFIPVWIFDTILLVLLIV), 78-98 (AWYLIAMLLKLAFCLALCAKL), and 110-130 (FIPLWALLAGALTELGYNVFF).

It is found in the membrane. The polypeptide is Transmembrane protein 60 (TMEM60) (Homo sapiens (Human)).